The sequence spans 580 residues: Bifunctional lycopene cyclase/phytoene synthase (580 aa).

3 consecutive transmembrane segments (helical) span residues 3-23 (WEYA…LAAV), 35-55 (KLVF…SYLI), and 65-85 (GVVV…FFVI). A glycan (N-linked (GlcNAc...) asparagine) is linked at Asn-89. Helical transmembrane passes span 116-136 (IAGQ…VSSG), 139-159 (GMYM…LWSI), 171-191 (NTAL…TFAL), and 214-234 (IEEA…LIAC).

In the N-terminal section; belongs to the lycopene beta-cyclase family. This sequence in the C-terminal section; belongs to the phytoene/squalene synthase family.

Its subcellular location is the membrane. The catalysed reaction is all-trans-lycopene = gamma-carotene. The enzyme catalyses gamma-carotene = all-trans-beta-carotene. It carries out the reaction 2 (2E,6E,10E)-geranylgeranyl diphosphate = 15-cis-phytoene + 2 diphosphate. It participates in carotenoid biosynthesis; beta-carotene biosynthesis. It functions in the pathway carotenoid biosynthesis; phytoene biosynthesis; all-trans-phytoene from geranylgeranyl diphosphate: step 1/1. Bifunctional enzyme; part of the car gene cluster that mediates the biosynthesis of neurosporaxanthin, a carboxylic apocarotenoid acting as an essential protective pigments and leading to orange pigmentation. CarAR catalyzes the first step of the pathway by converting geranylgeranyl diphosphate to phytoene, as well as the later cyclization step that transforms the carB product lycopene into gamma-carotene. CarAR also converts part of gamma-carotene into beta-carotene. Neurosporaxanthin is synthesized from geranyl-geranyl pyrophosphate (GGPP) through several enzymatic activities. Phytoene synthase activity performed by the bifunctional enzyme carAR first produces phytoene from geranyl-geranyl pyrophosphate (GGPP). The phytoene dehydrogenase carB then introduces 4 desaturations to lead to lycopene which is substrate of the carotene cyclase activity of carAR that leads to the production of gamma-carotene. CarB then performs a 5th desaturation reaction to yield torulene. Torulene is the substrate of the dioxidase carT that breaks the molecule, removing five carbon atoms to yield beta-apo-4'-carotenal, whereas the aldehyde dehydrogenase carD mediates the last step by converting beta-apo-4'-carotenal into neurosporaxanthin. The sequence is that of Bifunctional lycopene cyclase/phytoene synthase from Gibberella fujikuroi (strain CBS 195.34 / IMI 58289 / NRRL A-6831) (Bakanae and foot rot disease fungus).